The primary structure comprises 465 residues: Phosphatidate cytidylyltransferase (465 aa).

Positions 1–60 (MSDQPPAENADVRQRRAPESPVTERLRAPARDDARPTSDESDMEGILQDEDSDAGSKNKE) are disordered. The segment covering 10 to 38 (ADVRQRRAPESPVTERLRAPARDDARPTS) has biased composition (basic and acidic residues). The span at 39-53 (DESDMEGILQDEDSD) shows a compositional bias: acidic residues. A run of 8 helical transmembrane segments spans residues 95–117 (WVVR…TRGA), 121–143 (MFLV…LAVY), 158–178 (FLLT…WGIV), 187–207 (FLVA…FVSF), 214–234 (GYYM…LLIV), 239–259 (FIIQ…AMII), 288–308 (GFIG…LALY), and 367–387 (IALS…ASGF).

This sequence belongs to the CDS family.

It localises to the membrane. It carries out the reaction a 1,2-diacyl-sn-glycero-3-phosphate + CTP + H(+) = a CDP-1,2-diacyl-sn-glycerol + diphosphate. The protein operates within phospholipid metabolism; CDP-diacylglycerol biosynthesis; CDP-diacylglycerol from sn-glycerol 3-phosphate: step 3/3. Its function is as follows. Provides CDP-diacylglycerol, an important precursor for the synthesis of phosphatidylinositol (PtdIns). The chain is Phosphatidate cytidylyltransferase (cdgs-1) from Caenorhabditis elegans.